The chain runs to 182 residues: Orotate phosphoribosyltransferase (182 aa).

5-phospho-alpha-D-ribose 1-diphosphate contacts are provided by residues arginine 91, lysine 92, lysine 95, histidine 97, and 117–125 (EDVTTTGGS). Orotate-binding residues include threonine 121 and arginine 149.

Belongs to the purine/pyrimidine phosphoribosyltransferase family. PyrE subfamily. In terms of assembly, homodimer. Mg(2+) is required as a cofactor.

The enzyme catalyses orotidine 5'-phosphate + diphosphate = orotate + 5-phospho-alpha-D-ribose 1-diphosphate. Its pathway is pyrimidine metabolism; UMP biosynthesis via de novo pathway; UMP from orotate: step 1/2. Its function is as follows. Catalyzes the transfer of a ribosyl phosphate group from 5-phosphoribose 1-diphosphate to orotate, leading to the formation of orotidine monophosphate (OMP). This is Orotate phosphoribosyltransferase from Pyrococcus abyssi (strain GE5 / Orsay).